The chain runs to 393 residues: Isocitrate dehydrogenase [NADP] (393 aa).

The D-threo-isocitrate site is built by Ser-102, Asn-104, Arg-108, Arg-118, and Arg-142. Asp-283 is a binding site for Mg(2+).

It belongs to the isocitrate and isopropylmalate dehydrogenases family. As to quaternary structure, homodimer. The cofactor is Mg(2+). It depends on Mn(2+) as a cofactor.

The enzyme catalyses D-threo-isocitrate + NADP(+) = 2-oxoglutarate + CO2 + NADPH. Catalyzes the oxidative decarboxylation of isocitrate to 2-oxoglutarate and carbon dioxide with the concomitant reduction of NADP(+). The polypeptide is Isocitrate dehydrogenase [NADP] (icd) (Streptococcus mutans serotype c (strain ATCC 700610 / UA159)).